Here is a 216-residue protein sequence, read N- to C-terminus: Elongation factor Ts (216 aa).

Positions 81–84 (TDFV) are involved in Mg(2+) ion dislocation from EF-Tu.

This sequence belongs to the EF-Ts family.

The protein resides in the cytoplasm. In terms of biological role, associates with the EF-Tu.GDP complex and induces the exchange of GDP to GTP. It remains bound to the aminoacyl-tRNA.EF-Tu.GTP complex up to the GTP hydrolysis stage on the ribosome. This Geobacter sp. (strain M21) protein is Elongation factor Ts.